Reading from the N-terminus, the 112-residue chain is Putative pterin-4-alpha-carbinolamine dehydratase (112 aa).

This sequence belongs to the pterin-4-alpha-carbinolamine dehydratase family.

It catalyses the reaction (4aS,6R)-4a-hydroxy-L-erythro-5,6,7,8-tetrahydrobiopterin = (6R)-L-erythro-6,7-dihydrobiopterin + H2O. This Syntrophotalea carbinolica (strain DSM 2380 / NBRC 103641 / GraBd1) (Pelobacter carbinolicus) protein is Putative pterin-4-alpha-carbinolamine dehydratase.